The primary structure comprises 31 residues: Cytochrome b6-f complex subunit 6 (31 aa).

The chain crosses the membrane as a helical span at residues isoleucine 3–isoleucine 23.

The protein belongs to the PetL family. In terms of assembly, the 4 large subunits of the cytochrome b6-f complex are cytochrome b6, subunit IV (17 kDa polypeptide, PetD), cytochrome f and the Rieske protein, while the 4 small subunits are PetG, PetL, PetM and PetN. The complex functions as a dimer.

It is found in the plastid. The protein resides in the chloroplast thylakoid membrane. Functionally, component of the cytochrome b6-f complex, which mediates electron transfer between photosystem II (PSII) and photosystem I (PSI), cyclic electron flow around PSI, and state transitions. PetL is important for photoautotrophic growth as well as for electron transfer efficiency and stability of the cytochrome b6-f complex. This Welwitschia mirabilis (Tree tumbo) protein is Cytochrome b6-f complex subunit 6.